A 720-amino-acid polypeptide reads, in one-letter code: DNA gyrase subunit B (720 aa).

The segment covering 1–26 (MVDAMPENPAEEPTAASAAPNPEAVP) has biased composition (low complexity). The tract at residues 1–42 (MVDAMPENPAEEPTAASAAPNPEAVPDAVGQPEAPVKDRKVP) is disordered. The region spanning 498–612 (CEVYIVEGDS…AGHVFLAQPP (115 aa)) is the Toprim domain. Mg(2+) contacts are provided by glutamate 504, aspartate 577, and aspartate 579.

Belongs to the type II topoisomerase GyrB family. Heterotetramer, composed of two GyrA and two GyrB chains. In the heterotetramer, GyrA contains the active site tyrosine that forms a transient covalent intermediate with the DNA, while GyrB binds cofactors and catalyzes ATP hydrolysis. Requires Mg(2+) as cofactor. Mn(2+) serves as cofactor. It depends on Ca(2+) as a cofactor.

The protein localises to the cytoplasm. The enzyme catalyses ATP-dependent breakage, passage and rejoining of double-stranded DNA.. With respect to regulation, supercoiling activity inhibited by novobiocin and coumermycin, DNA wrapping around gyrase is not inhibited. Functionally, a type II topoisomerase that negatively supercoils DNA in an ATP-dependent manner. About 140 bp of DNA wraps around gyrase in the presence or absence of ATP, when ATP is added negative supercoils are made. Its function is as follows. A type II topoisomerase that negatively supercoils closed circular double-stranded (ds) DNA in an ATP-dependent manner to modulate DNA topology and maintain chromosomes in an underwound state. Negative supercoiling favors strand separation, and DNA replication, transcription, recombination and repair, all of which involve strand separation. Also able to catalyze the interconversion of other topological isomers of dsDNA rings, including catenanes and knotted rings. Type II topoisomerases break and join 2 DNA strands simultaneously in an ATP-dependent manner. The polypeptide is DNA gyrase subunit B (Micrococcus luteus (strain ATCC 4698 / DSM 20030 / JCM 1464 / CCM 169 / CCUG 5858 / IAM 1056 / NBRC 3333 / NCIMB 9278 / NCTC 2665 / VKM Ac-2230) (Micrococcus lysodeikticus)).